A 295-amino-acid chain; its full sequence is Ribosomal protein L11 methyltransferase (295 aa).

The S-adenosyl-L-methionine site is built by T145, G166, D188, and N230.

The protein belongs to the methyltransferase superfamily. PrmA family.

The protein localises to the cytoplasm. The enzyme catalyses L-lysyl-[protein] + 3 S-adenosyl-L-methionine = N(6),N(6),N(6)-trimethyl-L-lysyl-[protein] + 3 S-adenosyl-L-homocysteine + 3 H(+). Functionally, methylates ribosomal protein L11. The sequence is that of Ribosomal protein L11 methyltransferase from Shewanella amazonensis (strain ATCC BAA-1098 / SB2B).